Reading from the N-terminus, the 168-residue chain is Small ribosomal subunit protein uS5 (168 aa).

Residues 17–80 (IEDQLVAVNR…EDGKKKMINV (64 aa)) form the S5 DRBM domain.

It belongs to the universal ribosomal protein uS5 family. As to quaternary structure, part of the 30S ribosomal subunit. Contacts proteins S4 and S8.

Its function is as follows. With S4 and S12 plays an important role in translational accuracy. In terms of biological role, located at the back of the 30S subunit body where it stabilizes the conformation of the head with respect to the body. This chain is Small ribosomal subunit protein uS5, found in Lactobacillus helveticus (strain DPC 4571).